Here is a 232-residue protein sequence, read N- to C-terminus: Probable metallo-hydrolase M6_Spy0554 (232 aa).

Zn(2+)-binding residues include His75, His77, Asp79, His80, His155, Asp174, and His215.

It depends on Zn(2+) as a cofactor.

The polypeptide is Probable metallo-hydrolase M6_Spy0554 (Streptococcus pyogenes serotype M6 (strain ATCC BAA-946 / MGAS10394)).